The sequence spans 347 residues: Phenylalanine--tRNA ligase alpha subunit (347 aa).

Mg(2+) is bound at residue E265.

It belongs to the class-II aminoacyl-tRNA synthetase family. Phe-tRNA synthetase alpha subunit type 1 subfamily. Tetramer of two alpha and two beta subunits. Mg(2+) is required as a cofactor.

It localises to the cytoplasm. The enzyme catalyses tRNA(Phe) + L-phenylalanine + ATP = L-phenylalanyl-tRNA(Phe) + AMP + diphosphate + H(+). The sequence is that of Phenylalanine--tRNA ligase alpha subunit from Mycolicibacterium vanbaalenii (strain DSM 7251 / JCM 13017 / BCRC 16820 / KCTC 9966 / NRRL B-24157 / PYR-1) (Mycobacterium vanbaalenii).